Consider the following 221-residue polypeptide: Thymidylate kinase (221 aa).

10 to 17 serves as a coordination point for ATP; that stretch reads GIDGAGKT.

It belongs to the thymidylate kinase family.

It carries out the reaction dTMP + ATP = dTDP + ADP. Its function is as follows. Phosphorylation of dTMP to form dTDP in both de novo and salvage pathways of dTTP synthesis. The sequence is that of Thymidylate kinase from Desulforudis audaxviator (strain MP104C).